A 314-amino-acid chain; its full sequence is Solute carrier family 25 member 33 (314 aa).

Solcar repeat units follow at residues 4 to 111 (KDTL…SKET), 119 to 206 (NSGV…LKKY), and 224 to 308 (SDFL…IVHL). 6 consecutive transmembrane segments (helical) span residues 7-27 (LLHL…TCPL), 44-58 (VFQV…AGVI), 114-134 (GIFV…AAFI), 183-203 (LTAS…YETL), 226-246 (FLGL…IAYP), and 291-311 (QIPN…LLAE).

Belongs to the mitochondrial carrier (TC 2.A.29) family.

Its subcellular location is the mitochondrion inner membrane. Mitochondrial transporter that imports/exports pyrimidine nucleotides into and from mitochondria which participates in dendritic cell endocytosis. This chain is Solute carrier family 25 member 33 (slc25a33), found in Danio rerio (Zebrafish).